Consider the following 262-residue polypeptide: NADPH-dependent 7-cyano-7-deazaguanine reductase (262 aa).

69–71 (IES) is a substrate binding site. 71-72 (SK) provides a ligand contact to NADPH. Cys170 functions as the Thioimide intermediate in the catalytic mechanism. Asp177 functions as the Proton donor in the catalytic mechanism. Residue 209-210 (HE) participates in substrate binding. Residue 238-239 (RG) participates in NADPH binding.

Belongs to the GTP cyclohydrolase I family. QueF type 2 subfamily. In terms of assembly, homodimer.

It localises to the cytoplasm. It catalyses the reaction 7-aminomethyl-7-carbaguanine + 2 NADP(+) = 7-cyano-7-deazaguanine + 2 NADPH + 3 H(+). It participates in tRNA modification; tRNA-queuosine biosynthesis. Catalyzes the NADPH-dependent reduction of 7-cyano-7-deazaguanine (preQ0) to 7-aminomethyl-7-deazaguanine (preQ1). The chain is NADPH-dependent 7-cyano-7-deazaguanine reductase from Buchnera aphidicola subsp. Schizaphis graminum (strain Sg).